A 211-amino-acid chain; its full sequence is Regulator of G-protein signaling 2 (211 aa).

The tract at residues 32 to 66 (KMKRTLLKDWKTRLSYFLQNSSTPGKPKTGKKSKQ) is necessary for membrane association. The interval 79 to 116 (LWAEAFDELLASKYGLAAFRAFLKSEFCEENIEFWLAC) is necessary to inhibit protein synthesis. One can recognise an RGS domain in the interval 83-199 (AFDELLASKY…LESEFYQDLC (117 aa)).

Interacts with GNAQ. Does not interact with GNAI1 and GNAI3. Interacts with EIF2B5. Interacts with PRKG1 (isoform alpha). Post-translationally, phosphorylated by protein kinase C. Phosphorylation by PRKG1 leads to activation of RGS2 activity.

The protein resides in the cell membrane. It is found in the cytoplasm. It localises to the nucleus. Its subcellular location is the nucleolus. Functionally, regulates G protein-coupled receptor signaling cascades. Inhibits signal transduction by increasing the GTPase activity of G protein alpha subunits, thereby driving them into their inactive GDP-bound form. It is involved in the negative regulation of the angiotensin-activated signaling pathway. Plays a role in the regulation of blood pressure in response to signaling via G protein-coupled receptors and GNAQ. Plays a role in regulating the constriction and relaxation of vascular smooth muscle. Binds EIF2B5 and blocks its activity, thereby inhibiting the translation of mRNA into protein. The sequence is that of Regulator of G-protein signaling 2 (Rgs2) from Rattus norvegicus (Rat).